The sequence spans 251 residues: Hydroxyacylglutathione hydrolase (251 aa).

Histidine 53, histidine 55, aspartate 57, histidine 58, histidine 110, aspartate 127, and histidine 165 together coordinate Zn(2+).

It belongs to the metallo-beta-lactamase superfamily. Glyoxalase II family. As to quaternary structure, monomer. Requires Zn(2+) as cofactor.

The enzyme catalyses an S-(2-hydroxyacyl)glutathione + H2O = a 2-hydroxy carboxylate + glutathione + H(+). It participates in secondary metabolite metabolism; methylglyoxal degradation; (R)-lactate from methylglyoxal: step 2/2. In terms of biological role, thiolesterase that catalyzes the hydrolysis of S-D-lactoyl-glutathione to form glutathione and D-lactic acid. The protein is Hydroxyacylglutathione hydrolase of Escherichia coli O81 (strain ED1a).